We begin with the raw amino-acid sequence, 491 residues long: Ribulose-1,5 bisphosphate carboxylase/oxygenase large subunit N-methyltransferase, chloroplastic (491 aa).

In terms of domain architecture, SET spans 67–291; it reads EGVVTTKTPV…AGDQLFIQYD (225 aa).

This sequence belongs to the class V-like SAM-binding methyltransferase superfamily. Plant protein-lysine LSMT methyltransferase family.

It localises to the plastid. The protein resides in the chloroplast. It catalyses the reaction L-lysyl-[ribulose-1,5-bisphosphate carboxylase] + 3 S-adenosyl-L-methionine = N(6),N(6),N(6)-trimethyl-L-lysyl-[ribulose-1,5-bisphosphate carboxylase] + 3 S-adenosyl-L-homocysteine + 3 H(+). Functionally, methylates 'Lys-14' of the large subunit of RuBisCO. The chain is Ribulose-1,5 bisphosphate carboxylase/oxygenase large subunit N-methyltransferase, chloroplastic (RBCMT) from Nicotiana tabacum (Common tobacco).